Consider the following 164-residue polypeptide: Small ribosomal subunit protein uS3m (164 aa).

Residues Met1 to Leu23 constitute a mitochondrion transit peptide.

It belongs to the universal ribosomal protein uS3 family. Component of the mitochondrial ribosome small subunit (28S) which comprises a 12S rRNA and about 30 distinct proteins.

It localises to the mitochondrion. In Caenorhabditis elegans, this protein is Small ribosomal subunit protein uS3m (mrps-24).